A 429-amino-acid chain; its full sequence is Inner membrane transport protein RhmT (429 aa).

Over 1–16 (MSTALLDAVVKKNRVR) the chain is Cytoplasmic. A helical membrane pass occupies residues 17–37 (LIPFMLALYVLAFLDRSNIGF). Topologically, residues 38–54 (AKQTYQIDTGLSNEAYA) are periplasmic. The chain crosses the membrane as a helical span at residues 55–75 (LGAGIFFVVYAFLGVPANLLM). Residues 76 to 81 (RKLGAR) are Cytoplasmic-facing. Residues 82–102 (TWIGTTTLLWGFLSAAMAWAD) traverse the membrane as a helical segment. Residues 103 to 143 (TEAKFLIVRTLLRAAEAGFFPGMIYLTSQWFPQRNRASIMG) are Periplasmic-facing. A helical membrane pass occupies residues 144–164 (LFYMGAPLALTLGSPLSGALL). The Cytoplasmic segment spans residues 165–174 (EMHGFMGHPG). Residues 175–195 (WFWMFVIEGLLAVGAGVFTFF) traverse the membrane as a helical segment. At 196–242 (WLDDTPEQARFLSKQEKTLLINQLASEEQQKVTSRLSDALRNGRVWQ) the chain is on the periplasmic side. The chain crosses the membrane as a helical span at residues 243-263 (LAIIYLTIQVAVYGLIFFLPT). Topologically, residues 264–274 (QVAALLGTKVG) are cytoplasmic. The chain crosses the membrane as a helical span at residues 275-295 (FTASVVTAIPWVAALFGTWLI). Over 296 to 324 (PRYSDKTGERRNVAALTLLAAGIGIGLSG) the chain is Periplasmic. A helical membrane pass occupies residues 325 to 345 (LLSPVMAIVALCVAAIGFIAV). The Cytoplasmic portion of the chain corresponds to 346–361 (QPVFWTMPTQLLSGTA). A helical transmembrane segment spans residues 362-382 (LAAGIGFVNLFGAVGGFIAPI). Over 383-394 (LRVKAETLFASD) the chain is Periplasmic. A helical transmembrane segment spans residues 395–415 (AAGLLTLAAVAVIGSLIIFTL). At 416–429 (RVNRTVAQTDVAHH) the chain is on the cytoplasmic side.

This sequence belongs to the major facilitator superfamily. Phthalate permease family.

It localises to the cell inner membrane. In Escherichia coli (strain K12), this protein is Inner membrane transport protein RhmT (rhmT).